We begin with the raw amino-acid sequence, 241 residues long: NAD(P)H-quinone oxidoreductase subunit K (241 aa).

Cys60, Cys61, Cys125, and Cys156 together coordinate [4Fe-4S] cluster. Residues 220-241 are disordered; sequence SSQKEKITELPEKTEITNTEKD. Residues 222–241 are compositionally biased toward basic and acidic residues; sequence QKEKITELPEKTEITNTEKD.

This sequence belongs to the complex I 20 kDa subunit family. As to quaternary structure, NDH-1 can be composed of about 15 different subunits; different subcomplexes with different compositions have been identified which probably have different functions. It depends on [4Fe-4S] cluster as a cofactor.

The protein resides in the cellular thylakoid membrane. The catalysed reaction is a plastoquinone + NADH + (n+1) H(+)(in) = a plastoquinol + NAD(+) + n H(+)(out). It carries out the reaction a plastoquinone + NADPH + (n+1) H(+)(in) = a plastoquinol + NADP(+) + n H(+)(out). Functionally, NDH-1 shuttles electrons from an unknown electron donor, via FMN and iron-sulfur (Fe-S) centers, to quinones in the respiratory and/or the photosynthetic chain. The immediate electron acceptor for the enzyme in this species is believed to be plastoquinone. Couples the redox reaction to proton translocation, and thus conserves the redox energy in a proton gradient. Cyanobacterial NDH-1 also plays a role in inorganic carbon-concentration. The chain is NAD(P)H-quinone oxidoreductase subunit K from Prochlorococcus marinus (strain MIT 9215).